A 225-amino-acid chain; its full sequence is MIPSAYPDAKEMARLTARMLLEIHAVHFNAKDPFTLSSGLPSPTYIDCRKLISFPRIRATLMDFLTVTVMRDVGFEAFDNIAGGETAGIPFAALVAERMALPMTYVRKKPKGYGRNARIEGAMGEGERVLLVEDLTTDGGSKLSFVDAIRETGATCGHTAVIFYYDIFPETTKTLGDHGVALHSLCTWWDVLAEAKQQGVFDEATLSEVEKFLHNPRKWQEANKK.

Residues arginine 107, lysine 108, lysine 111, and 133 to 141 each bind 5-phospho-alpha-D-ribose 1-diphosphate; that span reads EDLTTDGGS. Orotate is bound at residue threonine 137.

This sequence belongs to the purine/pyrimidine phosphoribosyltransferase family. PyrE subfamily. In terms of assembly, homodimer. Requires Mg(2+) as cofactor.

The enzyme catalyses orotidine 5'-phosphate + diphosphate = orotate + 5-phospho-alpha-D-ribose 1-diphosphate. Its pathway is pyrimidine metabolism; UMP biosynthesis via de novo pathway; UMP from orotate: step 1/2. In terms of biological role, catalyzes the transfer of a ribosyl phosphate group from 5-phosphoribose 1-diphosphate to orotate, leading to the formation of orotidine monophosphate (OMP). The sequence is that of Orotate phosphoribosyltransferase from Roseobacter denitrificans (strain ATCC 33942 / OCh 114) (Erythrobacter sp. (strain OCh 114)).